The primary structure comprises 447 residues: Glutamate--tRNA ligase 1 (447 aa).

Positions 10–20 match the 'HIGH' region motif; the sequence is PSPTGMLHVGN. Residues 240-244 carry the 'KMSKS' region motif; that stretch reads KISKR. K243 is an ATP binding site.

It belongs to the class-I aminoacyl-tRNA synthetase family. Glutamate--tRNA ligase type 1 subfamily. Monomer.

The protein localises to the cytoplasm. It catalyses the reaction tRNA(Glu) + L-glutamate + ATP = L-glutamyl-tRNA(Glu) + AMP + diphosphate. In terms of biological role, catalyzes the attachment of glutamate to tRNA(Glu) in a two-step reaction: glutamate is first activated by ATP to form Glu-AMP and then transferred to the acceptor end of tRNA(Glu). The sequence is that of Glutamate--tRNA ligase 1 from Rickettsia massiliae (strain Mtu5).